Reading from the N-terminus, the 258-residue chain is tRNA (guanine-N(1)-)-methyltransferase (258 aa).

Residues Gly122 and Leu142 to Leu147 each bind S-adenosyl-L-methionine.

Belongs to the RNA methyltransferase TrmD family. In terms of assembly, homodimer.

The protein localises to the cytoplasm. It carries out the reaction guanosine(37) in tRNA + S-adenosyl-L-methionine = N(1)-methylguanosine(37) in tRNA + S-adenosyl-L-homocysteine + H(+). Specifically methylates guanosine-37 in various tRNAs. This is tRNA (guanine-N(1)-)-methyltransferase from Hahella chejuensis (strain KCTC 2396).